The following is a 512-amino-acid chain: Kelch repeat protein C2 (512 aa).

Positions 2 to 67 (ESVIFSINGE…IRWKKINITI (66 aa)) constitute a BTB domain. 6 Kelch repeats span residues 216-261 (IKHN…LHNC), 262-307 (LYII…VNNG), 309-354 (LYVI…FVND), 356-403 (IYVM…EYDG), 405-449 (IYVI…SCGD), and 452-498 (LIIA…THKS).

This sequence belongs to the poxviruses Kelch family.

This is Kelch repeat protein C2 from Homo sapiens (Human).